The primary structure comprises 290 residues: ATP synthase gamma chain (290 aa).

This sequence belongs to the ATPase gamma chain family. In terms of assembly, F-type ATPases have 2 components, CF(1) - the catalytic core - and CF(0) - the membrane proton channel. CF(1) has five subunits: alpha(3), beta(3), gamma(1), delta(1), epsilon(1). CF(0) has three main subunits: a, b and c.

The protein localises to the cell membrane. In terms of biological role, produces ATP from ADP in the presence of a proton gradient across the membrane. The gamma chain is believed to be important in regulating ATPase activity and the flow of protons through the CF(0) complex. This is ATP synthase gamma chain from Roseiflexus sp. (strain RS-1).